The primary structure comprises 1118 residues: Cytospin-A (1118 aa).

Disordered regions lie at residues 1–63 (MKKA…AGMA), 75–176 (KKST…NQIS), 294–324 (SLSP…GSVE), and 359–391 (SSDD…NASE). Positions 80–90 (SSAAPSAPAPA) are enriched in low complexity. Residues 93–117 (ISENKSKISTGTSSSAKRSTSAGNK) are compositionally biased toward polar residues. Over residues 120–131 (SSTRERLRERTR) the composition is skewed to basic and acidic residues. Positions 133 to 145 (NQSKKLPSVSQGA) are enriched in polar residues. Residues 158–171 (TAAEGDIRMSKSKS) are compositionally biased toward basic and acidic residues. Residues 168 to 281 (KSKSDNQISD…LNALGFSLEQ (114 aa)) adopt a coiled-coil conformation. Residues 294–304 (SLSPEITPGNQ) are compositionally biased toward polar residues. Low complexity predominate over residues 359–373 (SSDDALDAPSSSESE). Phosphoserine occurs at positions 385, 386, and 390. Coiled-coil stretches lie at residues 395–450 (ACLT…MESL) and 488–808 (RYME…RGRV). Phosphoserine occurs at positions 869, 882, and 888. The tract at residues 921–999 (TSSTSRPASL…STRSRIREER (79 aa)) is disordered. A compositionally biased stretch (basic and acidic residues) spans 947 to 957 (RSSEEMKRDIS). A compositionally biased stretch (low complexity) spans 972 to 992 (TTSPQLSLSSSPTASVTPSTR). Positions 1012–1117 (GSKRNALLKW…YVTAIYKYFE (106 aa)) constitute a Calponin-homology (CH) domain.

Belongs to the cytospin-A family. As to quaternary structure, may interact with both microtubules and actin cytoskeleton.

It localises to the cytoplasm. The protein resides in the cytoskeleton. Its subcellular location is the spindle. It is found in the cell junction. The protein localises to the gap junction. Its function is as follows. Involved in cytokinesis and spindle organization. May play a role in actin cytoskeleton organization and microtubule stabilization and hence required for proper cell adhesion and migration. This Mus musculus (Mouse) protein is Cytospin-A (Specc1l).